The sequence spans 236 residues: Small ribosomal subunit protein uS3 (236 aa).

Residues I39–R107 enclose the KH type-2 domain. Residues A214–A236 form a disordered region.

It belongs to the universal ribosomal protein uS3 family. As to quaternary structure, part of the 30S ribosomal subunit. Forms a tight complex with proteins S10 and S14.

Its function is as follows. Binds the lower part of the 30S subunit head. Binds mRNA in the 70S ribosome, positioning it for translation. In Brucella canis (strain ATCC 23365 / NCTC 10854 / RM-666), this protein is Small ribosomal subunit protein uS3.